A 601-amino-acid chain; its full sequence is MLTRKPSAAAPAAYPTGRGGDSAVRQLQASPGLGAGATRSGVGTGPPSPIALPPLRASNAAAAAHTIGGSKHTMNDHLHVGSHAHGQIQVQQLFEDNSNKRTVLTTQPNGLTTVGKTGLPVVPERQLDSIHRRQGSSTSLKSMEGMGKVKATPMTPEQAMKQYMQKLTAFEHHEIFSYPEIYFLGLNAKKRQGMTGGPNNGGYDDDQGSYVQVPHDHVAYRYEVLKVIGKGSFGQVVKAYDHKVHQHVALKMVRNEKRFHRQAAEEIRILEHLRKQDKDNTMNVIHMLENFTFRNHICMTFELLSMNLYELIKKNKFQGFSLPLVRKFAHSILQCLDALHKNRIIHCDLKPENILLKQQGRSGIKVIDFGSSCYEHQRVYTYIQSRFYRAPEVILGARYGMPIDMWSLGCILAELLTGYPLLPGEDEGDQLACMIELLGMPSQKLLDASKRAKNFVSSKGYPRYCTVTTLSDGSVVLNGGRSRRGKLRGPPESREWGNALKGCDDPLFLDFLKQCLEWDPAVRMTPGQALRHPWLRRRLPKPPTGEKTSVKRITESTGAITSISKLPPPSSSASKLRTNLAQMTDANGNIQQRTVLPKLVS.

The interval 1-24 is disordered; that stretch reads MLTRKPSAAAPAAYPTGRGGDSAV. Serine 30 is modified (phosphoserine). Position 106 is a phosphothreonine; by ATM (threonine 106). Positions 189-191 match the Nuclear localization signal motif; the sequence is KKR. Residues 222–535 enclose the Protein kinase domain; it reads YEVLKVIGKG…PGQALRHPWL (314 aa). Residues 228–236, lysine 251, and 301–304 contribute to the ATP site; these read IGKGSFGQV and FELL. Aspartate 348 acts as the Proton acceptor in catalysis. Position 381 is a phosphothreonine; by MAP3K10 (threonine 381). Tyrosine 382 is subject to Phosphotyrosine; by autocatalysis. Serine 442 carries the phosphoserine; by ATM modification. A Phosphoserine; by MAP3K10 modification is found at serine 449.

It belongs to the protein kinase superfamily. CMGC Ser/Thr protein kinase family. MNB/DYRK subfamily. Component of an E3 ligase complex containing DYRK2, EDD/UBR5, DDB1 and DCAF1 (EDVP complex). Interacts directly with EDD/UBR5, DDB1 and DCAF1. Interacts with SIAH2 and MDM2. Interacts with MAP3K10 and NFATC1. May also interact with CCNL2. Mg(2+) serves as cofactor. The cofactor is Mn(2+). Post-translationally, autophosphorylates cotranslationally on the second tyrosine residue in the Tyr-X-Tyr motif in the activation loop, but once mature, does not have any protein tyrosine kinase activity. Phosphorylated at Thr-106 and Ser-442 by ATM in response to genotoxic stress. In terms of processing, under normal conditions, polyubiquitinated in the nucleus by MDM2, leading to its proteasomal degradation. Phosphorylation on Thr-106 and Ser-442 by ATM in response to genotoxic stress disrupts MDM2 binding and prevents MDM2-mediated ubiquitination and subsequent proteasomal degradation. Polyubiquitinated by SIAH2, leading to its proteasomal degradation. Polyubiquitinated by SIAH2 occurs under normal conditions, and is enhanced in response to hypoxia. In terms of tissue distribution, testis, after the onset of spermatogenesis.

It localises to the cytoplasm. Its subcellular location is the nucleus. It carries out the reaction L-seryl-[protein] + ATP = O-phospho-L-seryl-[protein] + ADP + H(+). The enzyme catalyses L-threonyl-[protein] + ATP = O-phospho-L-threonyl-[protein] + ADP + H(+). The catalysed reaction is L-tyrosyl-[protein] + ATP = O-phospho-L-tyrosyl-[protein] + ADP + H(+). Activated by autophosphorylation on the second tyrosine residue in the Tyr-X-Tyr motif in the activation loop. Inhibited by acridine analogs, purvalanol, and barely by harmine. Inhibited by leucettine and leucettine derivatives. Functionally, serine/threonine-protein kinase involved in the regulation of the mitotic cell cycle, cell proliferation, apoptosis, organization of the cytoskeleton and neurite outgrowth. Functions in part via its role in ubiquitin-dependent proteasomal protein degradation. Functions downstream of ATM and phosphorylates p53/TP53 at 'Ser-46', and thereby contributes to the induction of apoptosis in response to DNA damage. Phosphorylates NFATC1, and thereby inhibits its accumulation in the nucleus and its transcription factor activity. Phosphorylates EIF2B5 at 'Ser-544', enabling its subsequent phosphorylation and inhibition by GSK3B. Likewise, phosphorylation of NFATC1, CRMP2/DPYSL2 and CRMP4/DPYSL3 promotes their subsequent phosphorylation by GSK3B. May play a general role in the priming of GSK3 substrates. Inactivates GYS1 by phosphorylation at 'Ser-641', and potentially also a second phosphorylation site, thus regulating glycogen synthesis. Mediates EDVP E3 ligase complex formation and is required for the phosphorylation and subsequent degradation of KATNA1. Phosphorylates TERT at 'Ser-457', promoting TERT ubiquitination by the EDVP complex. Phosphorylates SIAH2, and thereby increases its ubiquitin ligase activity. Promotes the proteasomal degradation of MYC and JUN, and thereby regulates progress through the mitotic cell cycle and cell proliferation. Promotes proteasomal degradation of GLI2 and GLI3, and thereby plays a role in smoothened and sonic hedgehog signaling. Plays a role in cytoskeleton organization and neurite outgrowth via its phosphorylation of DCX and DPYSL2. Phosphorylates CRMP2/DPYSL2, CRMP4/DPYSL3, DCX, EIF2B5, EIF4EBP1, GLI2, GLI3, GYS1, JUN, MDM2, MYC, NFATC1, p53/TP53, TAU/MAPT and KATNA1. Can phosphorylate histone H1, histone H3 and histone H2B (in vitro). Can phosphorylate CARHSP1 (in vitro). The protein is Dual specificity tyrosine-phosphorylation-regulated kinase 2 (DYRK2) of Homo sapiens (Human).